The following is a 48-amino-acid chain: uncharacterized protein (48 aa).

Belongs to the ELIP/psbS family.

The protein resides in the plastid. Its subcellular location is the chloroplast. Functionally, possible role in chlorophyll and/or carotenoid binding. This is an uncharacterized protein from Pyropia yezoensis (Susabi-nori).